Here is a 259-residue protein sequence, read N- to C-terminus: Phosphatidylglycerol--prolipoprotein diacylglyceryl transferase (259 aa).

The next 4 membrane-spanning stretches (helical) occupy residues 9–29 (IIFS…VIGI), 55–75 (FITY…VLLY), 92–112 (EGGM…YLFC), and 117–137 (INFL…LFLG). Arg138 is an a 1,2-diacyl-sn-glycero-3-phospho-(1'-sn-glycerol) binding site. 3 consecutive transmembrane segments (helical) span residues 172–192 (QLYE…YTTF), 201–221 (GLNS…IEIF), and 228–248 (IGFI…MLLL).

Belongs to the Lgt family.

It is found in the cell inner membrane. The catalysed reaction is L-cysteinyl-[prolipoprotein] + a 1,2-diacyl-sn-glycero-3-phospho-(1'-sn-glycerol) = an S-1,2-diacyl-sn-glyceryl-L-cysteinyl-[prolipoprotein] + sn-glycerol 1-phosphate + H(+). It participates in protein modification; lipoprotein biosynthesis (diacylglyceryl transfer). Its function is as follows. Catalyzes the transfer of the diacylglyceryl group from phosphatidylglycerol to the sulfhydryl group of the N-terminal cysteine of a prolipoprotein, the first step in the formation of mature lipoproteins. This chain is Phosphatidylglycerol--prolipoprotein diacylglyceryl transferase, found in Rickettsia conorii (strain ATCC VR-613 / Malish 7).